Reading from the N-terminus, the 248-residue chain is MWLGVVTLFPEMFRAVTDFGVTGRAVSKGLLELQTWNPRDFTHDKHKTVDDRPYGGGPGMLMMVQPLRDAIHAAKAAAGKEAKVIYLSPQGRKLTQQGVEELAKSSSLVLVCGRYEGVDERIIQTEVDEEWSIGDYVLSGGELPAMTLIDSVSRLVPGVLGKQASAEQDSFSDGLLDCPHYTRPESLDGLDVPAVLLSGNHEHIRRWRLQQSLGRTLLRRPELLENLALTGEQEKLLADFVDTIKQDD.

S-adenosyl-L-methionine is bound by residues glycine 113 and 133-138; that span reads IGDYVL.

This sequence belongs to the RNA methyltransferase TrmD family. As to quaternary structure, homodimer.

Its subcellular location is the cytoplasm. The enzyme catalyses guanosine(37) in tRNA + S-adenosyl-L-methionine = N(1)-methylguanosine(37) in tRNA + S-adenosyl-L-homocysteine + H(+). Its function is as follows. Specifically methylates guanosine-37 in various tRNAs. The polypeptide is tRNA (guanine-N(1)-)-methyltransferase (Shewanella halifaxensis (strain HAW-EB4)).